Consider the following 492-residue polypeptide: Acyl-CoA-binding domain-containing protein 5 (492 aa).

Residues histidine 8–methionine 97 enclose the ACB domain. An acyl-CoA contacts are provided by residues isoleucine 19–phenylalanine 28, tyrosine 39–lysine 43, lysine 65, and tyrosine 84. Disordered regions lie at residues alanine 141–glutamate 162 and valine 335–proline 399. Residues alanine 153–glutamate 162 show a composition bias toward acidic residues. A compositionally biased stretch (basic and acidic residues) spans valine 335–aspartate 360. Positions glycine 378–glycine 388 are enriched in gly residues. Residues aspartate 389–proline 399 show a composition bias toward basic and acidic residues. Residues glutamate 405–valine 431 adopt a coiled-coil conformation. The helical transmembrane segment at glycine 464–leucine 484 threads the bilayer.

This sequence belongs to the ATG37 family.

The protein localises to the peroxisome membrane. Its function is as follows. Acyl-CoA binding protein which acts as the peroxisome receptor for pexophagy but is dispensable for aggrephagy and nonselective autophagy. Binds medium- and long-chain acyl-CoA esters. The sequence is that of Acyl-CoA-binding domain-containing protein 5 (ACBD5) from Gallus gallus (Chicken).